Here is a 174-residue protein sequence, read N- to C-terminus: MDVVKKSRNVHGANDFSELIVSVRRVAKVVKGGRRFSFSVLVVIGDEKGKVGCGIGKHLEVSEAKVKAVNAAKKNMIRVHLRESRTLHHDVKAKFCASKVMLRSAKVGTGIIAGGSIRLIFEVLGVQDVVAKSIGSSNPHNVVYAVFAAFKKMLSPKQVANKRSRKIGDIIENR.

Residues 16–79 enclose the S5 DRBM domain; the sequence is FSELIVSVRR…NAAKKNMIRV (64 aa).

This sequence belongs to the universal ribosomal protein uS5 family. Part of the 30S ribosomal subunit. Contacts proteins S4 and S8.

With S4 and S12 plays an important role in translational accuracy. In terms of biological role, located at the back of the 30S subunit body where it stabilizes the conformation of the head with respect to the body. In Ehrlichia canis (strain Jake), this protein is Small ribosomal subunit protein uS5.